Here is a 92-residue protein sequence, read N- to C-terminus: Small ribosomal subunit protein uS19 (92 aa).

It belongs to the universal ribosomal protein uS19 family.

Protein S19 forms a complex with S13 that binds strongly to the 16S ribosomal RNA. This is Small ribosomal subunit protein uS19 from Phenylobacterium zucineum (strain HLK1).